A 242-amino-acid chain; its full sequence is tRNA pseudouridine synthase A (242 aa).

Aspartate 51 functions as the Nucleophile in the catalytic mechanism. Tyrosine 107 is a substrate binding site.

This sequence belongs to the tRNA pseudouridine synthase TruA family. In terms of assembly, homodimer.

It carries out the reaction uridine(38/39/40) in tRNA = pseudouridine(38/39/40) in tRNA. Formation of pseudouridine at positions 38, 39 and 40 in the anticodon stem and loop of transfer RNAs. The polypeptide is tRNA pseudouridine synthase A (Helicobacter acinonychis (strain Sheeba)).